The chain runs to 386 residues: Glyceraldehyde-3-phosphate dehydrogenase, chloroplastic (386 aa).

Residues M1–T45 constitute a chloroplast transit peptide. NADP(+) is bound by residues R58 to I59 and R125. D-glyceraldehyde 3-phosphate is bound by residues S197 to T199, T228, T257 to G258, and R280. C198 acts as the Nucleophile in catalysis. N362 contacts NADP(+).

This sequence belongs to the glyceraldehyde-3-phosphate dehydrogenase family. In terms of assembly, homotetramer.

It is found in the plastid. The protein resides in the chloroplast. It catalyses the reaction D-glyceraldehyde 3-phosphate + phosphate + NADP(+) = (2R)-3-phospho-glyceroyl phosphate + NADPH + H(+). The enzyme catalyses D-glyceraldehyde 3-phosphate + phosphate + NAD(+) = (2R)-3-phospho-glyceroyl phosphate + NADH + H(+). The protein operates within carbohydrate biosynthesis; Calvin cycle. The chain is Glyceraldehyde-3-phosphate dehydrogenase, chloroplastic (GAPC1) from Guillardia theta (Cryptophyte).